The sequence spans 832 residues: Alpha-glucan phosphorylase, H isozyme (832 aa).

Lysine 678 is modified (N6-(pyridoxal phosphate)lysine).

Belongs to the glycogen phosphorylase family. Requires pyridoxal 5'-phosphate as cofactor.

The protein localises to the cytoplasm. It carries out the reaction [(1-&gt;4)-alpha-D-glucosyl](n) + phosphate = [(1-&gt;4)-alpha-D-glucosyl](n-1) + alpha-D-glucose 1-phosphate. Phosphorylase is an important allosteric enzyme in carbohydrate metabolism. Enzymes from different sources differ in their regulatory mechanisms and in their natural substrates. However, all known phosphorylases share catalytic and structural properties. This is Alpha-glucan phosphorylase, H isozyme from Triticum aestivum (Wheat).